The following is a 160-amino-acid chain: Ribosomal RNA large subunit methyltransferase H (160 aa).

S-adenosyl-L-methionine-binding positions include L77, G109, and 128-133; that span reads FSRMTF.

Belongs to the RNA methyltransferase RlmH family. As to quaternary structure, homodimer.

The protein localises to the cytoplasm. The enzyme catalyses pseudouridine(1915) in 23S rRNA + S-adenosyl-L-methionine = N(3)-methylpseudouridine(1915) in 23S rRNA + S-adenosyl-L-homocysteine + H(+). Functionally, specifically methylates the pseudouridine at position 1915 (m3Psi1915) in 23S rRNA. The protein is Ribosomal RNA large subunit methyltransferase H of Pelotomaculum thermopropionicum (strain DSM 13744 / JCM 10971 / SI).